A 175-amino-acid polypeptide reads, in one-letter code: D-glycero-beta-D-manno-heptose-1,7-bisphosphate 7-phosphatase (175 aa).

The active-site Nucleophile is the aspartate 7. Mg(2+) is bound by residues aspartate 7 and aspartate 9. Residues aspartate 7–aspartate 9, aspartate 15–tyrosine 19, and threonine 50–serine 53 contribute to the substrate site. The active-site Proton donor is aspartate 9. Zn(2+) is bound by residues cysteine 89, histidine 91, cysteine 97, and cysteine 99. Arginine 100 to lysine 101 provides a ligand contact to substrate. Position 126 (aspartate 126) interacts with Mg(2+).

It belongs to the gmhB family. In terms of assembly, monomer. It depends on Mg(2+) as a cofactor. Zn(2+) serves as cofactor.

The protein localises to the cytoplasm. The catalysed reaction is D-glycero-beta-D-manno-heptose 1,7-bisphosphate + H2O = D-glycero-beta-D-manno-heptose 1-phosphate + phosphate. It participates in nucleotide-sugar biosynthesis; ADP-L-glycero-beta-D-manno-heptose biosynthesis; ADP-L-glycero-beta-D-manno-heptose from D-glycero-beta-D-manno-heptose 7-phosphate: step 2/4. The protein operates within bacterial outer membrane biogenesis; LPS core biosynthesis. In terms of biological role, converts the D-glycero-beta-D-manno-heptose 1,7-bisphosphate (beta-HBP) intermediate into D-glycero-beta-D-manno-heptose 1-phosphate by removing the phosphate group at the C-7 position. This is D-glycero-beta-D-manno-heptose-1,7-bisphosphate 7-phosphatase from Pseudomonas putida (strain ATCC 47054 / DSM 6125 / CFBP 8728 / NCIMB 11950 / KT2440).